The sequence spans 489 residues: L-asparagine permease 1 (489 aa).

12 consecutive transmembrane segments (helical) span residues 25–45, 49–69, 100–120, 137–157, 162–182, 210–230, 255–275, 289–309, 344–364, 369–389, 413–433, and 439–459; these read QLQM…GASG, KAGP…FLIL, AVGW…TTAI, ILAL…VEWF, FWAA…GTVF, WLPL…VELV, IAIF…YTAY, IGFH…ALSS, YGGI…NAFK, FEIV…TIVL, SPYS…TMAS, and TWTV…WYLV.

This sequence belongs to the amino acid-polyamine-organocation (APC) superfamily. Amino acid transporter (AAT) (TC 2.A.3.1) family.

It is found in the cell membrane. In Mycobacterium bovis (strain ATCC BAA-935 / AF2122/97), this protein is L-asparagine permease 1 (ansP1).